Here is a 419-residue protein sequence, read N- to C-terminus: Tyrosine--tRNA ligase (419 aa).

Tyr34 contributes to the L-tyrosine binding site. The 'HIGH' region motif lies at 39 to 48 (PSGDSMHIGH). L-tyrosine contacts are provided by Tyr168 and Gln172. Positions 230–234 (KFGKS) match the 'KMSKS' region motif. Lys233 contacts ATP. The S4 RNA-binding domain maps to 352–418 (ANLVDWLVTL…GKKKYFLVSY (67 aa)).

Belongs to the class-I aminoacyl-tRNA synthetase family. TyrS type 1 subfamily. In terms of assembly, homodimer.

It is found in the cytoplasm. The enzyme catalyses tRNA(Tyr) + L-tyrosine + ATP = L-tyrosyl-tRNA(Tyr) + AMP + diphosphate + H(+). Functionally, catalyzes the attachment of tyrosine to tRNA(Tyr) in a two-step reaction: tyrosine is first activated by ATP to form Tyr-AMP and then transferred to the acceptor end of tRNA(Tyr). The polypeptide is Tyrosine--tRNA ligase (Listeria monocytogenes serotype 4b (strain CLIP80459)).